The chain runs to 371 residues: Protein-tyrosine sulfotransferase 2 (371 aa).

Topologically, residues 1-8 are cytoplasmic; that stretch reads MRVTMRRV. A helical; Signal-anchor for type II membrane protein membrane pass occupies residues 9 to 25; sequence LLAVGSVVALMVTLHLG. Residues 26–371 lie on the Lumenal side of the membrane; that stretch reads QQVLECQHVL…QVTQNTSSSH (346 aa). 76–80 contacts 3'-phosphoadenylyl sulfate; that stretch reads RSGTT. Residues cysteine 94 and cysteine 154 are joined by a disulfide bond. Glutamate 97 acts as the Proton donor/acceptor in catalysis. An interaction with peptide substrate region spans residues 99–103; that stretch reads RIIPR. 3'-phosphoadenylyl sulfate is bound by residues arginine 181, serine 189, and arginine 193. Cysteine 223 and cysteine 231 are joined by a disulfide. 3'-phosphoadenylyl sulfate-binding positions include tyrosine 236, 283-292, and lysine 298; that span reads STDQVIKPVN. 2 N-linked (GlcNAc...) asparagine glycosylation sites follow: asparagine 341 and asparagine 366.

This sequence belongs to the protein sulfotransferase family.

The protein localises to the golgi apparatus membrane. The catalysed reaction is L-tyrosyl-[protein] + 3'-phosphoadenylyl sulfate = O-sulfo-L-tyrosine-[protein] + adenosine 3',5'-bisphosphate + H(+). In terms of biological role, catalyzes the O-sulfation of tyrosine residues within acidic motifs of polypeptides, using 3'-phosphoadenylyl sulfate (PAPS) as cosubstrate. This is Protein-tyrosine sulfotransferase 2 (TPST2) from Gallus gallus (Chicken).